The following is a 357-amino-acid chain: DNA replication and repair protein RecF (357 aa).

Position 30 to 37 (30 to 37 (GPNGSGKT)) interacts with ATP.

This sequence belongs to the RecF family.

It is found in the cytoplasm. Its function is as follows. The RecF protein is involved in DNA metabolism; it is required for DNA replication and normal SOS inducibility. RecF binds preferentially to single-stranded, linear DNA. It also seems to bind ATP. This chain is DNA replication and repair protein RecF, found in Vibrio campbellii (strain ATCC BAA-1116).